Here is a 235-residue protein sequence, read N- to C-terminus: Probable WRKY transcription factor 66 (235 aa).

Positions 79 to 147 (SPTPAHIDGF…YVGQHACEAP (69 aa)) form a DNA-binding region, WRKY.

This sequence belongs to the WRKY group III family.

It localises to the nucleus. Its function is as follows. Transcription factor. Interacts specifically with the W box (5'-(T)TGAC[CT]-3'), a frequently occurring elicitor-responsive cis-acting element. The chain is Probable WRKY transcription factor 66 (WRKY66) from Arabidopsis thaliana (Mouse-ear cress).